The primary structure comprises 254 residues: MSTPFYVSPQQAMADRAEYARKGIARGRSLVVLQYADGIVFVGENPSRALHKFSEIYDRIGFAAAGKYNEYENLRIGGVRYADLRGYTYDRDDVTARGLANVYAQTLGTIFSSQAEKPYEVELVVAEVGDSPENDQIYRLPHDGSIVDEHGSVAVGGNAEQISGYLDQRHRDGMTLAEALKLAVQALSRDTNGTEREIPAERLEVAVLDRTRPQQRKFKRIVGGQLSRLLESGAASADGEAETEAETDSGSDEE.

Residues 231–254 (ESGAASADGEAETEAETDSGSDEE) form a disordered region. Positions 239-254 (GEAETEAETDSGSDEE) are enriched in acidic residues.

The protein belongs to the peptidase T1A family. As to quaternary structure, the 20S proteasome core is composed of 14 alpha and 14 beta subunits that assemble into four stacked heptameric rings, resulting in a barrel-shaped structure. The two inner rings, each composed of seven catalytic beta subunits, are sandwiched by two outer rings, each composed of seven alpha subunits. The catalytic chamber with the active sites is on the inside of the barrel. Has probably a gated structure, the ends of the cylinder being occluded by the N-termini of the alpha-subunits. Is likely capped by the proteasome-associated ATPase, ARC. The N-terminus is blocked.

It localises to the cytoplasm. Its pathway is protein degradation; proteasomal Pup-dependent pathway. The formation of the proteasomal ATPase ARC-20S proteasome complex, likely via the docking of the C-termini of ARC into the intersubunit pockets in the alpha-rings, may trigger opening of the gate for substrate entry. Interconversion between the open-gate and close-gate conformations leads to a dynamic regulation of the 20S proteasome proteolysis activity. Peptidolytic activity is completely inhibited by lactacystin, and to a lesser extent, by N-acetyl-Leu-Leu-norleucinal (Ac-LLnL) and benzoyloxycarbonyl-Leu-Leu-Leu-vinylsulfone (Z-LLL-VS) in vitro. In terms of biological role, component of the proteasome core, a large protease complex with broad specificity involved in protein degradation. The S.coelicolor proteasome is able to cleave oligopeptides after hydrophobic residues, but not after basic or acidic residues, thus displaying chymotrypsin-like activity but not trypsin-like activity. This is Proteasome subunit alpha from Streptomyces coelicolor (strain ATCC BAA-471 / A3(2) / M145).